A 589-amino-acid polypeptide reads, in one-letter code: 3-hydroxy-3-methylglutaryl coenzyme A reductase 2-B (589 aa).

Over 1–35 (MDVRRRPVTKTLTAGEPLKSQNQHSSSLKASDALP) the chain is Lumenal. Residues 36 to 56 (LPLYLTNGLFFTMFFSVMYFL) form a helical membrane-spanning segment. Residues 57-79 (LHRWREKIRNSVPLHVVTLSELA) lie on the Cytoplasmic side of the membrane. The chain crosses the membrane as a helical span at residues 80-100 (ALVLLVASVIYLLGFFGIGFV). The Lumenal portion of the chain corresponds to 101 to 544 (QSLIRPSPDS…SKESPGPNSR (444 aa)). An N-linked (GlcNAc...) asparagine glycan is attached at asparagine 256. Glutamate 268 functions as the Charge relay system in the catalytic mechanism. N-linked (GlcNAc...) asparagine glycosylation occurs at asparagine 332. Active-site charge relay system residues include lysine 400 and aspartate 476. A helical transmembrane segment spans residues 545–565 (LLASIVAGSVLAGELSLMSAL). Residues 566–589 (AAGQLVKSHMKFNRSSKDVSKLSS) lie on the Cytoplasmic side of the membrane. The Proton donor role is filled by histidine 574.

It belongs to the HMG-CoA reductase family.

It localises to the endoplasmic reticulum membrane. The catalysed reaction is (R)-mevalonate + 2 NADP(+) + CoA = (3S)-3-hydroxy-3-methylglutaryl-CoA + 2 NADPH + 2 H(+). It participates in metabolic intermediate biosynthesis; (R)-mevalonate biosynthesis; (R)-mevalonate from acetyl-CoA: step 3/3. In terms of biological role, catalyzes the synthesis of mevalonate, the specific precursor of all isoprenoid compounds present in plants. Component of the triterpene saponins (e.g. ginsenosides or panaxosides) and phytosterols biosynthetic pathways. Promotes triterpenes accumulation in roots. This Panax ginseng (Korean ginseng) protein is 3-hydroxy-3-methylglutaryl coenzyme A reductase 2-B.